The chain runs to 912 residues: MSAPPVLRPPSPLLPVAAAAAAAAAALVPGSGPGPAPFLAPVAAPVGGISFHLQIGLSREPVLLLQDSSGDYSLAHVREMACSIVDQKFPECGFYGMYDKILLFRHDPTSENILQLVKAASDIQEGDLIEVVLSASATFEDFQIRPHALFVHSYRAPAFCDHCGEMLWGLVRQGLKCEGCGLNYHKRCAFKIPNNCSGVRRRRLSNVSLTGVSTIRTSSAELSTSAPDEPLLQKSPSESFIGREKRSNSQSYIGRPIHLDKILMSKVKVPHTFVIHSYTRPTVCQYCKKLLKGLFRQGLQCKDCRFNCHKRCAPKVPNNCLGEVTINGDLLSPGAESDVVMEEGSDDNDSERNSGLMDDMEEAMVQDAEMAMAECQNDSGEMQDPDPDHEDANRTISPSTSNNIPLMRVVQSVKHTKRKSSTVMKEGWMVHYTSKDTLRKRHYWRLDSKCITLFQNDTGSRYYKEIPLSEILSLEPVKTSALIPNGANPHCFEITTANVVYYVGENVVNPSSPSPNNSVLTSGVGADVARMWEIAIQHALMPVIPKGSSVGTGTNLHRDISVSISVSNCQIQENVDISTVYQIFPDEVLGSGQFGIVYGGKHRKTGRDVAIKIIDKLRFPTKQESQLRNEVAILQNLHHPGVVNLECMFETPERVFVVMEKLHGDMLEMILSSEKGRLPEHITKFLITQILVALRHLHFKNIVHCDLKPENVLLASADPFPQVKLCDFGFARIIGEKSFRRSVVGTPAYLAPEVLRNKGYNRSLDMWSVGVIIYVSLSGTFPFNEDEDIHDQIQNAAFMYPPNPWKEISHEAIDLINNLLQVKMRKRYSVDKTLSHPWLQDYQTWLDLRELECKIGERYITHESDDLRWEKYAGEQGLQYPTHLINPSASHSDTPETEETEMKALGERVSIL.

Position 95 is a phosphotyrosine (Y95). The segment at 146-196 (PHALFVHSYRAPAFCDHCGEMLWGLVRQGLKCEGCGLNYHKRCAFKIPNNC) adopts a Phorbol-ester/DAG-type 1 zinc-finger fold. Phosphoserine is present on residues S205, S208, S219, and S223. A Phorbol-ester/DAG-type 2 zinc finger spans residues 270–320 (PHTFVIHSYTRPTVCQYCKKLLKGLFRQGLQCKDCRFNCHKRCAPKVPNNC). The residue at position 345 (S345) is a Phosphoserine. A disordered region spans residues 377–402 (NDSGEMQDPDPDHEDANRTISPSTSN). Phosphoserine; by MAPK13 is present on residues S397 and S401. A PH domain is found at 422–541 (TVMKEGWMVH…WEIAIQHALM (120 aa)). Y432 is modified (phosphotyrosine). Phosphoserine is present on S448. Y463 carries the post-translational modification Phosphotyrosine; by ABL. S473 is modified (phosphoserine). Residue Y502 is modified to Phosphotyrosine. S548 bears the Phosphoserine mark. Positions 583–839 (IFPDEVLGSG…VDKTLSHPWL (257 aa)) constitute a Protein kinase domain. Residues 589–597 (LGSGQFGIV) and K612 contribute to the ATP site. Residue D706 is the Proton acceptor of the active site. At S738 the chain carries Phosphoserine; by PKC/PRKCD. S742 carries the phosphoserine; by autocatalysis and PKC/PRKCD modification. Y749 is subject to Phosphotyrosine. S910 carries the post-translational modification Phosphoserine; by autocatalysis.

Belongs to the protein kinase superfamily. CAMK Ser/Thr protein kinase family. PKD subfamily. As to quaternary structure, interacts (via N-terminus) with ADAP1/CENTA1. Interacts with MAPK13. Interacts with DAPK1 in an oxidative stress-regulated manner. Interacts with USP28; the interaction induces phosphorylation of USP28 and activated KRAS-mediated stabilization of ZNF304. Interacts with AKAP13 (via C-terminal domain). Requires Mg(2+) as cofactor. In terms of processing, phosphorylated at Ser-397 and Ser-401 by MAPK13 during regulation of insulin secretion in pancreatic beta cells. Phosphorylated by DAPK1. Phosphorylated at Tyr-95 and by ABL at Tyr-463, which primes the kinase in response to oxidative stress, and promotes a second step activating phosphorylation at Ser-738/Ser-742 by PKRD. Phosphorylated on Ser-910 upon S.enterica infection in macrophages.

The protein resides in the cytoplasm. It is found in the cell membrane. It localises to the golgi apparatus. Its subcellular location is the trans-Golgi network. The catalysed reaction is L-seryl-[protein] + ATP = O-phospho-L-seryl-[protein] + ADP + H(+). The enzyme catalyses L-threonyl-[protein] + ATP = O-phospho-L-threonyl-[protein] + ADP + H(+). Its activity is regulated as follows. Activated by DAG and phorbol esters. Phorbol-ester/DAG-type domain 1 binds DAG with high affinity and appears to play the dominant role in mediating translocation to the cell membrane and trans-Golgi network. Phorbol-ester/DAG-type domain 2 binds phorbol ester with higher affinity. Autophosphorylation of Ser-742 and phosphorylation of Ser-738 by PKC relieves auto-inhibition by the PH domain. Phosphorylation on Tyr-463 by the SRC-ABL1 pathway in response to oxidative stress, is also required for activation. Activated by DAPK1 under oxidative stress. Its function is as follows. Serine/threonine-protein kinase that converts transient diacylglycerol (DAG) signals into prolonged physiological effects downstream of PKC, and is involved in the regulation of MAPK8/JNK1 and Ras signaling, Golgi membrane integrity and trafficking, cell survival through NF-kappa-B activation, cell migration, cell differentiation by mediating HDAC7 nuclear export, cell proliferation via MAPK1/3 (ERK1/2) signaling, and plays a role in cardiac hypertrophy, VEGFA-induced angiogenesis, genotoxic-induced apoptosis and flagellin-stimulated inflammatory response. Phosphorylates the epidermal growth factor receptor (EGFR) on dual threonine residues, which leads to the suppression of epidermal growth factor (EGF)-induced MAPK8/JNK1 activation and subsequent JUN phosphorylation. Phosphorylates RIN1, inducing RIN1 binding to 14-3-3 proteins YWHAB, YWHAE and YWHAZ and increased competition with RAF1 for binding to GTP-bound form of Ras proteins (NRAS, HRAS and KRAS). Acts downstream of the heterotrimeric G-protein beta/gamma-subunit complex to maintain the structural integrity of the Golgi membranes, and is required for protein transport along the secretory pathway. In the trans-Golgi network (TGN), regulates the fission of transport vesicles that are on their way to the plasma membrane. May act by activating the lipid kinase phosphatidylinositol 4-kinase beta (PI4KB) at the TGN for the local synthesis of phosphorylated inositol lipids, which induces a sequential production of DAG, phosphatidic acid (PA) and lyso-PA (LPA) that are necessary for membrane fission and generation of specific transport carriers to the cell surface. Under oxidative stress, is phosphorylated at Tyr-463 via SRC-ABL1 and contributes to cell survival by activating IKK complex and subsequent nuclear translocation and activation of NFKB1. Involved in cell migration by regulating integrin alpha-5/beta-3 recycling and promoting its recruitment in newly forming focal adhesion. In osteoblast differentiation, mediates the bone morphogenetic protein 2 (BMP2)-induced nuclear export of HDAC7, which results in the inhibition of HDAC7 transcriptional repression of RUNX2. In neurons, plays an important role in neuronal polarity by regulating the biogenesis of TGN-derived dendritic vesicles, and is involved in the maintenance of dendritic arborization and Golgi structure in hippocampal cells. May potentiate mitogenesis induced by the neuropeptide bombesin or vasopressin by mediating an increase in the duration of MAPK1/3 (ERK1/2) signaling, which leads to accumulation of immediate-early gene products including FOS that stimulate cell cycle progression. Plays an important role in the proliferative response induced by low calcium in keratinocytes, through sustained activation of MAPK1/3 (ERK1/2) pathway. Downstream of novel PKC signaling, plays a role in cardiac hypertrophy by phosphorylating HDAC5, which in turn triggers XPO1/CRM1-dependent nuclear export of HDAC5, MEF2A transcriptional activation and induction of downstream target genes that promote myocyte hypertrophy and pathological cardiac remodeling. Mediates cardiac troponin I (TNNI3) phosphorylation at the PKA sites, which results in reduced myofilament calcium sensitivity, and accelerated crossbridge cycling kinetics. The PRKD1-HDAC5 pathway is also involved in angiogenesis by mediating VEGFA-induced specific subset of gene expression, cell migration, and tube formation. In response to VEGFA, is necessary and required for HDAC7 phosphorylation which induces HDAC7 nuclear export and endothelial cell proliferation and migration. During apoptosis induced by cytarabine and other genotoxic agents, PRKD1 is cleaved by caspase-3 at Asp-378, resulting in activation of its kinase function and increased sensitivity of cells to the cytotoxic effects of genotoxic agents. In epithelial cells, is required for transducing flagellin-stimulated inflammatory responses by binding and phosphorylating TLR5, which contributes to MAPK14/p38 activation and production of inflammatory cytokines. Acts as an activator of NLRP3 inflammasome assembly by mediating phosphorylation of NLRP3. May play a role in inflammatory response by mediating activation of NF-kappa-B. May be involved in pain transmission by directly modulating TRPV1 receptor. Plays a role in activated KRAS-mediated stabilization of ZNF304 in colorectal cancer (CRC) cells. Regulates nuclear translocation of transcription factor TFEB in macrophages upon live S.enterica infection. In Homo sapiens (Human), this protein is Serine/threonine-protein kinase D1 (PRKD1).